We begin with the raw amino-acid sequence, 1197 residues long: Disease resistance-like protein CSA1 (1197 aa).

The TIR domain maps to 15-178; it reads PQDQVFINFR…IIIRKVKEIL (164 aa). Glu89 is a catalytic residue. One can recognise an NB-ARC domain in the interval 210 to 480; that stretch reads RIKQLEEKLR…ACFRSQDENY (271 aa). LRR repeat units follow at residues 614-636, 638-659, 694-716, 728-749, 750-774, 776-796, 797-819, 820-843, 845-862, and 863-889; these read LNEVRYLHWLKFPLKEVPQDFNP, NLVDLKLPYSEIERVWEDNKDA, TALKEMHVDMENMKFLVFLNLRG, LISLKTLILSGCSKFKTFQVIS, DKLEALYLDGTAIKELPCDIGRLQR, VMLNMKGCKKLKRLPDSLGQL, KALEELILSGCSKLNEFPETWGN, MSRLEILLLDETAIKDMPKILSVR, LCLNKNEKISRLPDLLNK, and FSQLQWLHLKYCKNLTHVPQLPPNLQY.

The catalysed reaction is NAD(+) + H2O = ADP-D-ribose + nicotinamide + H(+). Its function is as follows. TIR-NB-LRR receptor-like protein that functions in photomorphogenic development. May function downstream of phytochrome B (phyB) signaling. This is Disease resistance-like protein CSA1 from Arabidopsis thaliana (Mouse-ear cress).